The sequence spans 223 residues: Type II restriction enzyme BglII (223 aa).

Residues aspartate 84 and valine 94 each contribute to the Mg(2+) site.

Homodimer. Mg(2+) is required as a cofactor.

The enzyme catalyses Endonucleolytic cleavage of DNA to give specific double-stranded fragments with terminal 5'-phosphates.. A P subtype restriction enzyme that recognizes the double-stranded sequence 5'-AGATCT-3' and cleaves after A-1. The polypeptide is Type II restriction enzyme BglII (bglIIR) (Bacillus subtilis).